The following is a 73-amino-acid chain: UPF0337 protein lp_1708 (73 aa).

Basic and acidic residues-rich tracts occupy residues methionine 1–glutamine 35 and lysine 44–aspartate 73. Positions methionine 1–aspartate 73 are disordered.

It belongs to the UPF0337 (CsbD) family.

The protein is UPF0337 protein lp_1708 of Lactiplantibacillus plantarum (strain ATCC BAA-793 / NCIMB 8826 / WCFS1) (Lactobacillus plantarum).